Here is a 430-residue protein sequence, read N- to C-terminus: Tektin-2 (430 aa).

2 coiled-coil regions span residues 80 to 162 and 225 to 382; these read KCLT…FEQL and NKDR…CKAN.

The protein belongs to the tektin family. As to quaternary structure, microtubule inner protein component of sperm flagellar doublet microtubules. May interact with CCDC172. In terms of processing, tyrosine phosphorylated. Ubiquitinated, leading to its degradation. Deubiquitinated by USP16, promoting its stability. As to expression, expressed at high levels in testis, trachea and fetal lung, and at lower levels in ovary, pituitary, adult lung, fetal brain and fetal kidney.

The protein localises to the cytoplasm. Its subcellular location is the cytoskeleton. It localises to the cilium axoneme. The protein resides in the flagellum axoneme. It is found in the microtubule organizing center. Functionally, microtubule inner protein (MIP) part of the dynein-decorated doublet microtubules (DMTs) in cilia and flagellar axoneme. Plays a key role in the assembly or attachment of the inner dynein arm to microtubules in sperm flagella and tracheal cilia. Forms filamentous polymers in the walls of ciliary and flagellar microtubules. The protein is Tektin-2 of Homo sapiens (Human).